Here is a 201-residue protein sequence, read N- to C-terminus: 3-isopropylmalate dehydratase small subunit (201 aa).

The protein belongs to the LeuD family. LeuD type 1 subfamily. In terms of assembly, heterodimer of LeuC and LeuD.

The enzyme catalyses (2R,3S)-3-isopropylmalate = (2S)-2-isopropylmalate. Its pathway is amino-acid biosynthesis; L-leucine biosynthesis; L-leucine from 3-methyl-2-oxobutanoate: step 2/4. Its function is as follows. Catalyzes the isomerization between 2-isopropylmalate and 3-isopropylmalate, via the formation of 2-isopropylmaleate. In Brucella abortus (strain S19), this protein is 3-isopropylmalate dehydratase small subunit.